A 122-amino-acid polypeptide reads, in one-letter code: Small ribosomal subunit protein uS13 (122 aa).

Residues 93–122 form a disordered region; sequence RRGLPVRGQRTKTNARTRKGPKKTIAGKKK.

It belongs to the universal ribosomal protein uS13 family. As to quaternary structure, part of the 30S ribosomal subunit. Forms a loose heterodimer with protein S19. Forms two bridges to the 50S subunit in the 70S ribosome.

Its function is as follows. Located at the top of the head of the 30S subunit, it contacts several helices of the 16S rRNA. In the 70S ribosome it contacts the 23S rRNA (bridge B1a) and protein L5 of the 50S subunit (bridge B1b), connecting the 2 subunits; these bridges are implicated in subunit movement. Contacts the tRNAs in the A and P-sites. In Corynebacterium efficiens (strain DSM 44549 / YS-314 / AJ 12310 / JCM 11189 / NBRC 100395), this protein is Small ribosomal subunit protein uS13.